Here is a 349-residue protein sequence, read N- to C-terminus: Lipoyl synthase (349 aa).

Residues cysteine 55, cysteine 60, cysteine 66, cysteine 81, cysteine 85, cysteine 88, and serine 292 each contribute to the [4Fe-4S] cluster site. Residues 67–281 enclose the Radical SAM core domain; the sequence is WESREATFLI…ADFARELGFG (215 aa).

Belongs to the radical SAM superfamily. Lipoyl synthase family. Requires [4Fe-4S] cluster as cofactor.

The protein localises to the cytoplasm. The enzyme catalyses [[Fe-S] cluster scaffold protein carrying a second [4Fe-4S](2+) cluster] + N(6)-octanoyl-L-lysyl-[protein] + 2 oxidized [2Fe-2S]-[ferredoxin] + 2 S-adenosyl-L-methionine + 4 H(+) = [[Fe-S] cluster scaffold protein] + N(6)-[(R)-dihydrolipoyl]-L-lysyl-[protein] + 4 Fe(3+) + 2 hydrogen sulfide + 2 5'-deoxyadenosine + 2 L-methionine + 2 reduced [2Fe-2S]-[ferredoxin]. It functions in the pathway protein modification; protein lipoylation via endogenous pathway; protein N(6)-(lipoyl)lysine from octanoyl-[acyl-carrier-protein]: step 2/2. Functionally, catalyzes the radical-mediated insertion of two sulfur atoms into the C-6 and C-8 positions of the octanoyl moiety bound to the lipoyl domains of lipoate-dependent enzymes, thereby converting the octanoylated domains into lipoylated derivatives. This chain is Lipoyl synthase, found in Corynebacterium diphtheriae (strain ATCC 700971 / NCTC 13129 / Biotype gravis).